We begin with the raw amino-acid sequence, 152 residues long: Ribonuclease pancreatic (152 aa).

An N-terminal signal peptide occupies residues 1-24 (MALDKSVILLPLLVLVLLVLGCLG). The substrate site is built by lysine 31 and arginine 34. Histidine 36 serves as the catalytic Proton acceptor. Asparagine 46 carries an N-linked (GlcNAc...) asparagine glycan. 4 disulfides stabilise this stretch: cysteine 50–cysteine 108, cysteine 64–cysteine 119, cysteine 82–cysteine 134, and cysteine 89–cysteine 96. Substrate contacts are provided by residues 65 to 69 (KPVNT), lysine 90, and arginine 109. N-linked (GlcNAc...) asparagine glycosylation is present at asparagine 112. Histidine 143 functions as the Proton donor in the catalytic mechanism.

It belongs to the pancreatic ribonuclease family. As to quaternary structure, monomer. Interacts with and forms tight 1:1 complexes with RNH1. Dimerization of two such complexes may occur. Interaction with RNH1 inhibits this protein.

The protein localises to the secreted. It carries out the reaction an [RNA] containing cytidine + H2O = an [RNA]-3'-cytidine-3'-phosphate + a 5'-hydroxy-ribonucleotide-3'-[RNA].. The enzyme catalyses an [RNA] containing uridine + H2O = an [RNA]-3'-uridine-3'-phosphate + a 5'-hydroxy-ribonucleotide-3'-[RNA].. In terms of biological role, endonuclease that catalyzes the cleavage of RNA on the 3' side of pyrimidine nucleotides. Acts on single-stranded and double-stranded RNA. The sequence is that of Ribonuclease pancreatic (RNASE1) from Miopithecus talapoin (Angolan talapoin).